The following is a 692-amino-acid chain: Vacuolar amino acid transporter 3 (692 aa).

Over residues 1–14 the composition is skewed to polar residues; sequence MNGKEVSSGSGRTQ. Residues 1–71 are disordered; sequence MNGKEVSSGS…TGGLLKKPPL (71 aa). Over residues 15 to 24 the composition is skewed to low complexity; sequence SNNNKKNNNG. Polar residues predominate over residues 28–38; that stretch reads GISHASGSPLT. A phosphoserine mark is found at serine 59, serine 119, and serine 121. 2 disordered regions span residues 135–170 and 258–294; these read KWTN…SNRK and DLSE…GRHP. The segment covering 141-153 has biased composition (low complexity); that stretch reads PSSPSQYQYPSQP. Residues 154–167 are compositionally biased toward polar residues; that stretch reads ALSTSIPSQAPSFS. Serine 165 is modified (phosphoserine). A compositionally biased stretch (acidic residues) spans 258 to 279; that stretch reads DLSEEEEEEEETEEEPEEEALE. Helical transmembrane passes span 302–322, 329–349, 374–394, 412–432, 443–463, 483–503, 519–539, 561–581, 607–627, 630–650, and 665–685; these read AVLL…PKAF, FSAL…VSLI, FAIL…YTVF, GSIS…PLSL, ALIA…YSIY, WSLF…LIPI, AVMC…YAAF, VQLL…FPAI, YFRC…ANDL, FVSL…PPLL, and LLLD…TSWQ.

This sequence belongs to the amino acid/polyamine transporter 2 family.

It is found in the vacuole membrane. Involved in amino acid efflux from the vacuole to the cytoplasm. Capable of transporting large neutral amino acids including tyrosine, glutamine, asparagine, isoleucine and leucine. The polypeptide is Vacuolar amino acid transporter 3 (AVT3) (Saccharomyces cerevisiae (strain ATCC 204508 / S288c) (Baker's yeast)).